Reading from the N-terminus, the 305-residue chain is UDP-3-O-acyl-N-acetylglucosamine deacetylase (305 aa).

Zn(2+)-binding residues include His-79, His-238, and Asp-242. The Proton donor role is filled by His-265.

The protein belongs to the LpxC family. Zn(2+) is required as a cofactor.

It carries out the reaction a UDP-3-O-[(3R)-3-hydroxyacyl]-N-acetyl-alpha-D-glucosamine + H2O = a UDP-3-O-[(3R)-3-hydroxyacyl]-alpha-D-glucosamine + acetate. It participates in glycolipid biosynthesis; lipid IV(A) biosynthesis; lipid IV(A) from (3R)-3-hydroxytetradecanoyl-[acyl-carrier-protein] and UDP-N-acetyl-alpha-D-glucosamine: step 2/6. Catalyzes the hydrolysis of UDP-3-O-myristoyl-N-acetylglucosamine to form UDP-3-O-myristoylglucosamine and acetate, the committed step in lipid A biosynthesis. The protein is UDP-3-O-acyl-N-acetylglucosamine deacetylase of Shigella boydii serotype 4 (strain Sb227).